The chain runs to 142 residues: MQHARKKFRVGRTSAHNRCMLANMLKSLIHQERIETTLPKAKELRRCADKMITLAKKNTLAARRLAVARLMVRYNKLTSKEARQAKAGDLSVYNVDRKVINKLFDELGTRFVSRQGGYTRILKLQNRVGDNARKCIIEFLAN.

Belongs to the bacterial ribosomal protein bL17 family. As to quaternary structure, part of the 50S ribosomal subunit. Contacts protein L32.

The sequence is that of Large ribosomal subunit protein bL17 from Chlamydia felis (strain Fe/C-56) (Chlamydophila felis).